The sequence spans 126 residues: Aspartate 1-decarboxylase (126 aa).

The Schiff-base intermediate with substrate; via pyruvic acid role is filled by Ser25. The residue at position 25 (Ser25) is a Pyruvic acid (Ser). Residue Thr57 participates in substrate binding. The active-site Proton donor is Tyr58. 73–75 (GGA) lines the substrate pocket.

This sequence belongs to the PanD family. In terms of assembly, heterooctamer of four alpha and four beta subunits. The cofactor is pyruvate. Is synthesized initially as an inactive proenzyme, which is activated by self-cleavage at a specific serine bond to produce a beta-subunit with a hydroxyl group at its C-terminus and an alpha-subunit with a pyruvoyl group at its N-terminus.

The protein localises to the cytoplasm. The catalysed reaction is L-aspartate + H(+) = beta-alanine + CO2. Its pathway is cofactor biosynthesis; (R)-pantothenate biosynthesis; beta-alanine from L-aspartate: step 1/1. Catalyzes the pyruvoyl-dependent decarboxylation of aspartate to produce beta-alanine. The polypeptide is Aspartate 1-decarboxylase (Xanthomonas campestris pv. campestris (strain ATCC 33913 / DSM 3586 / NCPPB 528 / LMG 568 / P 25)).